A 154-amino-acid polypeptide reads, in one-letter code: NADPH-dependent 7-cyano-7-deazaguanine reductase (154 aa).

A disordered region spans residues 1–24; that stretch reads MPKTDVSGLSQLGTKVDLPQSPEE. Cysteine 52 serves as the catalytic Thioimide intermediate. Residue aspartate 59 is the Proton donor of the active site. Residues 74–76 and 93–94 contribute to the substrate site; these read VES and HE.

The protein belongs to the GTP cyclohydrolase I family. QueF type 1 subfamily.

Its subcellular location is the cytoplasm. The enzyme catalyses 7-aminomethyl-7-carbaguanine + 2 NADP(+) = 7-cyano-7-deazaguanine + 2 NADPH + 3 H(+). Its pathway is tRNA modification; tRNA-queuosine biosynthesis. Catalyzes the NADPH-dependent reduction of 7-cyano-7-deazaguanine (preQ0) to 7-aminomethyl-7-deazaguanine (preQ1). In Sinorhizobium fredii (strain NBRC 101917 / NGR234), this protein is NADPH-dependent 7-cyano-7-deazaguanine reductase.